Consider the following 212-residue polypeptide: 2-hydroxychromene-2-carboxylate isomerase (212 aa).

Ser24 (nucleophile) is an active-site residue. Ser24 contributes to the glutathione binding site. Residues Lys56, 66–67, and Tyr97 each bind substrate; that span reads NR. Glutathione-binding positions include Val181 and 192 to 195; that span reads WGND.

Belongs to the GST superfamily. NadH family. Glutathione serves as cofactor.

It catalyses the reaction 2-hydroxychromene-2-carboxylate = (3E)-4-(2-hydroxyphenyl)-2-oxobut-3-enoate. It participates in aromatic compound metabolism; naphthalene degradation. Functionally, involved in the naphthalene catabolic pathway. Catalyzes the reversible glutathione-dependent isomerization of 2-hydroxychromene-2-carboxylate (HCCA) to trans-O-hydroxybenzylidenepyruvate (THBPA). The protein is 2-hydroxychromene-2-carboxylate isomerase (doxJ) of Pseudomonas sp. (strain C18).